The sequence spans 421 residues: Large ribosomal subunit protein uL4 (421 aa).

Position 2 is an N-acetylalanine (Ala-2). N6-acetyllysine is present on Lys-14. Arg-97 carries the omega-N-methylarginine modification. An N6-acetyllysine modification is found at Lys-106. Lys-239 participates in a covalent cross-link: Glycyl lysine isopeptide (Lys-Gly) (interchain with G-Cter in SUMO2). At Lys-259 the chain carries N6-acetyllysine. Residue Thr-266 is modified to Phosphothreonine. Ser-290 is subject to Phosphoserine. Arg-300 is modified (citrulline). A Glycyl lysine isopeptide (Lys-Gly) (interchain with G-Cter in SUMO2) cross-link involves residue Lys-327. N6-acetyllysine occurs at positions 333 and 353. Positions 359-421 (EAKSEEKGVP…PTTEEKKPAA (63 aa)) are disordered. The residue at position 361 (Lys-361) is an N6-acetyllysine; alternate. A Glycyl lysine isopeptide (Lys-Gly) (interchain with G-Cter in SUMO1); alternate cross-link involves residue Lys-361. Phosphoserine is present on Ser-362. Basic residues predominate over residues 368-391 (PGKKPRRKKGKKTVGVKKPKKPVV). Over residues 401–421 (PAADKKPAEKKPTTEEKKPAA) the composition is skewed to basic and acidic residues.

Belongs to the universal ribosomal protein uL4 family. In terms of assembly, component of the large ribosomal subunit. May bind IPO9 with low affinity. Interacts with RBM3. Post-translationally, citrullinated by PADI4.

The protein localises to the cytoplasm. In terms of biological role, component of the large ribosomal subunit. The ribosome is a large ribonucleoprotein complex responsible for the synthesis of proteins in the cell. The polypeptide is Large ribosomal subunit protein uL4 (RPL4) (Canis lupus familiaris (Dog)).